The following is a 147-amino-acid chain: Small ribosomal subunit protein uS12 (147 aa).

The protein belongs to the universal ribosomal protein uS12 family. As to quaternary structure, part of the 30S ribosomal subunit.

With S4 and S5 plays an important role in translational accuracy. Located at the interface of the 30S and 50S subunits. The protein is Small ribosomal subunit protein uS12 of Saccharolobus solfataricus (strain ATCC 35092 / DSM 1617 / JCM 11322 / P2) (Sulfolobus solfataricus).